Consider the following 444-residue polypeptide: Methylenetetrahydrofolate--tRNA-(uracil-5-)-methyltransferase TrmFO (444 aa).

Residue 10–15 (GAGLAG) participates in FAD binding.

This sequence belongs to the MnmG family. TrmFO subfamily. FAD is required as a cofactor.

It localises to the cytoplasm. It catalyses the reaction uridine(54) in tRNA + (6R)-5,10-methylene-5,6,7,8-tetrahydrofolate + NADH + H(+) = 5-methyluridine(54) in tRNA + (6S)-5,6,7,8-tetrahydrofolate + NAD(+). It carries out the reaction uridine(54) in tRNA + (6R)-5,10-methylene-5,6,7,8-tetrahydrofolate + NADPH + H(+) = 5-methyluridine(54) in tRNA + (6S)-5,6,7,8-tetrahydrofolate + NADP(+). In terms of biological role, catalyzes the folate-dependent formation of 5-methyl-uridine at position 54 (M-5-U54) in all tRNAs. The sequence is that of Methylenetetrahydrofolate--tRNA-(uracil-5-)-methyltransferase TrmFO from Streptococcus equi subsp. equi (strain 4047).